The following is a 484-amino-acid chain: Aspartyl/glutamyl-tRNA(Asn/Gln) amidotransferase subunit B (484 aa).

The protein belongs to the GatB/GatE family. GatB subfamily. In terms of assembly, heterotrimer of A, B and C subunits.

The catalysed reaction is L-glutamyl-tRNA(Gln) + L-glutamine + ATP + H2O = L-glutaminyl-tRNA(Gln) + L-glutamate + ADP + phosphate + H(+). It catalyses the reaction L-aspartyl-tRNA(Asn) + L-glutamine + ATP + H2O = L-asparaginyl-tRNA(Asn) + L-glutamate + ADP + phosphate + 2 H(+). In terms of biological role, allows the formation of correctly charged Asn-tRNA(Asn) or Gln-tRNA(Gln) through the transamidation of misacylated Asp-tRNA(Asn) or Glu-tRNA(Gln) in organisms which lack either or both of asparaginyl-tRNA or glutaminyl-tRNA synthetases. The reaction takes place in the presence of glutamine and ATP through an activated phospho-Asp-tRNA(Asn) or phospho-Glu-tRNA(Gln). The chain is Aspartyl/glutamyl-tRNA(Asn/Gln) amidotransferase subunit B from Bordetella pertussis (strain Tohama I / ATCC BAA-589 / NCTC 13251).